Consider the following 117-residue polypeptide: Photosystem II reaction center Psb28 protein (117 aa).

It belongs to the Psb28 family. Part of the photosystem II complex.

It localises to the cellular thylakoid membrane. The polypeptide is Photosystem II reaction center Psb28 protein (Prochlorococcus marinus (strain MIT 9301)).